The sequence spans 576 residues: Enolase 4 (576 aa).

A disordered region spans residues 187–232; sequence ELRNEAMSEAPPQATPTSAPAKDKKGNDKGKKGNITENPLPPAEPP. A compositionally biased stretch (low complexity) spans 196 to 206; it reads APPQATPTSAP. Basic and acidic residues predominate over residues 207 to 217; that stretch reads AKDKKGNDKGK. Positions 302 and 524 each coordinate substrate.

It belongs to the enolase family.

The enzyme catalyses (2R)-2-phosphoglycerate = phosphoenolpyruvate + H2O. It participates in carbohydrate degradation; glycolysis; pyruvate from D-glyceraldehyde 3-phosphate: step 4/5. The protein is Enolase 4 (eno4) of Danio rerio (Zebrafish).